Reading from the N-terminus, the 422-residue chain is Inhibitory synaptic factor 2A (422 aa).

Residues 143-163 are disordered; the sequence is FLADSKEKSEAGPMEEPRPCS. Over residues 146–160 the composition is skewed to basic and acidic residues; the sequence is DSKEKSEAGPMEEPR. A Phosphoserine modification is found at Ser177. Positions 344–370 form a coiled coil; that stretch reads TEVVDLKAQLQVMENLISSSQETIKVL.

This sequence belongs to the INSYN2 family. In terms of assembly, interacts with GPHN.

The protein localises to the postsynaptic density. Functionally, component of the protein machinery at the inhibitory synapses, probably acting as a scaffold. Inhibitory synapses dampen neuronal activity through postsynaptic hyperpolarization. This synaptic inhibition is fundamental for the functioning of the central nervous system, shaping and orchestrating the flow of information through neuronal networks to generate a precise neural code. This is Inhibitory synaptic factor 2A from Mus musculus (Mouse).